A 436-amino-acid chain; its full sequence is MHIVVVGLSHRTAPVEVREKLSIPDQSITKSLKALKAFSEVLEVSILSTCNRLEIYALVKDKNTGISSIKEFISDYSGIIFEDLNPHLFCFRQEDAVLHLMKVSAGLDSLVLGEGQILSQVKKMMRLGQENQSTGPILNRLLTQSVSTGKKVRSETNLGTGAVSISSAAVELAQLKIGQEKGFDTLVSLESEKVLVVGAGRMSRLLITHLKAKGCHKLILVNRNIDRALNLAIDFPDIEIVCKGLNELDENISISSLVFTSTASEEPIIDLAKIEKLNLNNKLKFIDIGVPRNISNDVKNHQFVKSFDVDDLQEVVSRNQEFRQKIAKEAESLVEEERIIFLEWWASLEAVPVINKLRSDLELIRKEELQKALSRMGPDFSARERKVVEALTKGIINKILHTPVTKLRSPQSREERQASLKIVEKLFSLVDEDKNS.

Substrate contacts are provided by residues 49-52, S109, 114-116, and Q120; these read TCNR and EGQ. Residue C50 is the Nucleophile of the active site. 198–203 contributes to the NADP(+) binding site; it reads GAGRMS.

This sequence belongs to the glutamyl-tRNA reductase family. Homodimer.

The catalysed reaction is (S)-4-amino-5-oxopentanoate + tRNA(Glu) + NADP(+) = L-glutamyl-tRNA(Glu) + NADPH + H(+). It participates in porphyrin-containing compound metabolism; protoporphyrin-IX biosynthesis; 5-aminolevulinate from L-glutamyl-tRNA(Glu): step 1/2. It functions in the pathway porphyrin-containing compound metabolism; chlorophyll biosynthesis. Catalyzes the NADPH-dependent reduction of glutamyl-tRNA(Glu) to glutamate 1-semialdehyde (GSA). The chain is Glutamyl-tRNA reductase from Prochlorococcus marinus (strain MIT 9312).